Here is a 96-residue protein sequence, read N- to C-terminus: UPF0235 protein KPK_0722 (96 aa).

This sequence belongs to the UPF0235 family.

The chain is UPF0235 protein KPK_0722 from Klebsiella pneumoniae (strain 342).